Reading from the N-terminus, the 866-residue chain is Probable beta-glucosidase F (866 aa).

The first 20 residues, 1 to 20, serve as a signal peptide directing secretion; it reads MAAFPAYLALLSYLVPGALS. N-linked (GlcNAc...) asparagine glycans are attached at residues asparagine 65, asparagine 73, and asparagine 257. Aspartate 285 is an active-site residue. Asparagine 328, asparagine 360, asparagine 395, asparagine 421, asparagine 474, asparagine 659, asparagine 664, and asparagine 724 each carry an N-linked (GlcNAc...) asparagine glycan. The interval 725-748 is disordered; it reads SSKTYPYPDGYTTEPKPAPRAGGA.

Belongs to the glycosyl hydrolase 3 family.

The protein resides in the secreted. The enzyme catalyses Hydrolysis of terminal, non-reducing beta-D-glucosyl residues with release of beta-D-glucose.. The protein operates within glycan metabolism; cellulose degradation. Its function is as follows. Beta-glucosidases are one of a number of cellulolytic enzymes involved in the degradation of cellulosic biomass. Catalyzes the last step releasing glucose from the inhibitory cellobiose. This Aspergillus flavus (strain ATCC 200026 / FGSC A1120 / IAM 13836 / NRRL 3357 / JCM 12722 / SRRC 167) protein is Probable beta-glucosidase F (bglF).